Here is a 612-residue protein sequence, read N- to C-terminus: Chaperone protein DnaK (612 aa).

T173 is subject to Phosphothreonine; by autocatalysis. The tract at residues 576 to 612 (AAKAQQAEGGANAEGKKADDNVVDAEYEEVKDDETKK) is disordered. Residues 578 to 588 (KAQQAEGGANA) are compositionally biased toward low complexity. Acidic residues predominate over residues 596–612 (NVVDAEYEEVKDDETKK).

It belongs to the heat shock protein 70 family.

In terms of biological role, acts as a chaperone. The protein is Chaperone protein DnaK of Bacillus velezensis (strain DSM 23117 / BGSC 10A6 / LMG 26770 / FZB42) (Bacillus amyloliquefaciens subsp. plantarum).